The primary structure comprises 38 residues: Large ribosomal subunit protein bL36 (38 aa).

The protein belongs to the bacterial ribosomal protein bL36 family.

The polypeptide is Large ribosomal subunit protein bL36 (Flavobacterium psychrophilum (strain ATCC 49511 / DSM 21280 / CIP 103535 / JIP02/86)).